We begin with the raw amino-acid sequence, 320 residues long: Ribose-phosphate pyrophosphokinase (320 aa).

Residue 41–43 (NDN) participates in ATP binding. His134 and Asp175 together coordinate Mg(2+). The active site involves Lys198. Residues Arg200 and Asp224 each contribute to the D-ribose 5-phosphate site.

The protein belongs to the ribose-phosphate pyrophosphokinase family. Class I subfamily. As to quaternary structure, homohexamer. Mg(2+) is required as a cofactor.

Its subcellular location is the cytoplasm. The enzyme catalyses D-ribose 5-phosphate + ATP = 5-phospho-alpha-D-ribose 1-diphosphate + AMP + H(+). It functions in the pathway metabolic intermediate biosynthesis; 5-phospho-alpha-D-ribose 1-diphosphate biosynthesis; 5-phospho-alpha-D-ribose 1-diphosphate from D-ribose 5-phosphate (route I): step 1/1. Functionally, involved in the biosynthesis of the central metabolite phospho-alpha-D-ribosyl-1-pyrophosphate (PRPP) via the transfer of pyrophosphoryl group from ATP to 1-hydroxyl of ribose-5-phosphate (Rib-5-P). The protein is Ribose-phosphate pyrophosphokinase of Deinococcus radiodurans (strain ATCC 13939 / DSM 20539 / JCM 16871 / CCUG 27074 / LMG 4051 / NBRC 15346 / NCIMB 9279 / VKM B-1422 / R1).